Reading from the N-terminus, the 163-residue chain is Phosphopantetheine adenylyltransferase (163 aa).

Residue Thr10 participates in substrate binding. Residues 10–11 (TF) and His18 contribute to the ATP site. Residues Lys42, Leu74, and Arg88 each contribute to the substrate site. ATP contacts are provided by residues 89 to 91 (GLR), Glu99, and 124 to 130 (NSFISST).

The protein belongs to the bacterial CoaD family. In terms of assembly, homohexamer. It depends on Mg(2+) as a cofactor.

The protein resides in the cytoplasm. It carries out the reaction (R)-4'-phosphopantetheine + ATP + H(+) = 3'-dephospho-CoA + diphosphate. The protein operates within cofactor biosynthesis; coenzyme A biosynthesis; CoA from (R)-pantothenate: step 4/5. Functionally, reversibly transfers an adenylyl group from ATP to 4'-phosphopantetheine, yielding dephospho-CoA (dPCoA) and pyrophosphate. The protein is Phosphopantetheine adenylyltransferase of Shewanella baltica (strain OS155 / ATCC BAA-1091).